A 322-amino-acid chain; its full sequence is Putative T-box protein 11 (322 aa).

Residues 16-185 (LWRSCHEYDN…NNPYSTGSRK (170 aa)) constitute a DNA-binding region (T-box). The span at 171–182 (TLKTNNNPYSTG) shows a compositional bias: polar residues. The tract at residues 171-214 (TLKTNNNPYSTGSRKDRRRERQSPVYSEGTSSEKSISPPPAKKI) is disordered.

The protein resides in the nucleus. In Caenorhabditis elegans, this protein is Putative T-box protein 11 (tbx-11).